The chain runs to 360 residues: uncharacterized protein (360 aa).

The PNPLA domain occupies 19-179 (LALGSGGARG…LDPLPMAPIA (161 aa)). The short motif at 50 to 54 (GSSMG) is the GXSXG element. Ser52 serves as the catalytic Nucleophile. Residue Asp166 is the Proton acceptor of the active site. The short motif at 166 to 168 (DGG) is the DGA/G element. Residues 251 to 282 (DSWSQAPEIEQRPAGPPADREEAADTPGLPKM) are disordered.

The protein belongs to the NTE family.

This is an uncharacterized protein from Mycobacterium bovis (strain ATCC BAA-935 / AF2122/97).